A 417-amino-acid polypeptide reads, in one-letter code: Cell division protein FtsA (417 aa).

The protein belongs to the FtsA/MreB family. As to quaternary structure, self-interacts. Interacts with FtsZ.

It localises to the cell inner membrane. Functionally, cell division protein that is involved in the assembly of the Z ring. May serve as a membrane anchor for the Z ring. The polypeptide is Cell division protein FtsA (Pseudomonas aeruginosa (strain ATCC 15692 / DSM 22644 / CIP 104116 / JCM 14847 / LMG 12228 / 1C / PRS 101 / PAO1)).